The chain runs to 171 residues: Shikimate kinase (171 aa).

14–19 (GAGKST) lines the ATP pocket. Serine 18 provides a ligand contact to Mg(2+). Residues aspartate 36, arginine 60, and glycine 82 each contribute to the substrate site. An ATP-binding site is contributed by arginine 120. Arginine 139 serves as a coordination point for substrate. An ATP-binding site is contributed by glutamine 156.

It belongs to the shikimate kinase family. In terms of assembly, monomer. Mg(2+) is required as a cofactor.

The protein localises to the cytoplasm. It carries out the reaction shikimate + ATP = 3-phosphoshikimate + ADP + H(+). It participates in metabolic intermediate biosynthesis; chorismate biosynthesis; chorismate from D-erythrose 4-phosphate and phosphoenolpyruvate: step 5/7. Functionally, catalyzes the specific phosphorylation of the 3-hydroxyl group of shikimic acid using ATP as a cosubstrate. This chain is Shikimate kinase, found in Psychromonas ingrahamii (strain DSM 17664 / CCUG 51855 / 37).